Reading from the N-terminus, the 86-residue chain is DNA-directed RNA polymerase subunit Rpo6 (86 aa).

It belongs to the archaeal Rpo6/eukaryotic RPB6 RNA polymerase subunit family. In terms of assembly, part of the RNA polymerase complex.

The protein resides in the cytoplasm. The enzyme catalyses RNA(n) + a ribonucleoside 5'-triphosphate = RNA(n+1) + diphosphate. Its function is as follows. DNA-dependent RNA polymerase (RNAP) catalyzes the transcription of DNA into RNA using the four ribonucleoside triphosphates as substrates. This is DNA-directed RNA polymerase subunit Rpo6 from Sulfurisphaera tokodaii (strain DSM 16993 / JCM 10545 / NBRC 100140 / 7) (Sulfolobus tokodaii).